The primary structure comprises 458 residues: Phosphoglucosamine mutase (458 aa).

Ser108 (phosphoserine intermediate) is an active-site residue. Positions 108, 247, 249, and 251 each coordinate Mg(2+). Position 108 is a phosphoserine (Ser108).

The protein belongs to the phosphohexose mutase family. The cofactor is Mg(2+). Activated by phosphorylation.

The catalysed reaction is alpha-D-glucosamine 1-phosphate = D-glucosamine 6-phosphate. Catalyzes the conversion of glucosamine-6-phosphate to glucosamine-1-phosphate. This is Phosphoglucosamine mutase from Nitrosomonas europaea (strain ATCC 19718 / CIP 103999 / KCTC 2705 / NBRC 14298).